A 229-amino-acid polypeptide reads, in one-letter code: Protein fmp52-2, mitochondrial (229 aa).

The transit peptide at 1–44 (MTAAAVFGCTGAVGSQILATLLASDAFSSVATVSRKLPTAESPK) directs the protein to the mitochondrion.

It belongs to the FMP52 family.

The protein resides in the mitochondrion outer membrane. This is Protein fmp52-2, mitochondrial (fmp522) from Aspergillus terreus (strain NIH 2624 / FGSC A1156).